Reading from the N-terminus, the 72-residue chain is Translation initiation factor IF-1 (72 aa).

The S1-like domain maps to 1–72 (MAKEDVIEVE…TRGRITYRFK (72 aa)).

Belongs to the IF-1 family. In terms of assembly, component of the 30S ribosomal translation pre-initiation complex which assembles on the 30S ribosome in the order IF-2 and IF-3, IF-1 and N-formylmethionyl-tRNA(fMet); mRNA recruitment can occur at any time during PIC assembly.

It localises to the cytoplasm. Its function is as follows. One of the essential components for the initiation of protein synthesis. Stabilizes the binding of IF-2 and IF-3 on the 30S subunit to which N-formylmethionyl-tRNA(fMet) subsequently binds. Helps modulate mRNA selection, yielding the 30S pre-initiation complex (PIC). Upon addition of the 50S ribosomal subunit IF-1, IF-2 and IF-3 are released leaving the mature 70S translation initiation complex. The chain is Translation initiation factor IF-1 from Listeria innocua serovar 6a (strain ATCC BAA-680 / CLIP 11262).